A 427-amino-acid chain; its full sequence is Transcription factor MYB98 (427 aa).

Residues 195–202 (TRKLSSSS) carry the Nuclear localization signal 1 motif. HTH myb-type domains follow at residues 212–267 (KSTL…RPDI) and 268–318 (KKET…RRQF). 2 consecutive DNA-binding regions (H-T-H motif) follow at residues 240 to 263 (WSHI…HNHL) and 291 to 314 (WAEI…NATK). The Nuclear localization signal 2 motif lies at 361-368 (NKKKDVVV).

In terms of tissue distribution, expressed at high levels in the synergid cells of the female gametophyte, and at lower levels in the endosperm of young seeds and the trichomes of young leaves and sepals.

It is found in the nucleus. Its function is as follows. Transcription factor that binds to the motif 5'-GTAACNT-3' in the promoter of target genes (e.g. DD11 and DD18) and promotes their expression within synergid cells (e.g. in the filiform apparatus) in ovules. Required for the formation of the filiform apparatus during synergid cell differentiation in the female gametophyte. Involved in pollen tube guidance to the micropyle. This chain is Transcription factor MYB98, found in Arabidopsis thaliana (Mouse-ear cress).